Here is a 444-residue protein sequence, read N- to C-terminus: Putative cytochrome P450 120 (444 aa).

Cys391 is a heme binding site.

Belongs to the cytochrome P450 family. It depends on heme as a cofactor.

This is Putative cytochrome P450 120 (cyp120) from Synechocystis sp. (strain ATCC 27184 / PCC 6803 / Kazusa).